A 418-amino-acid polypeptide reads, in one-letter code: Gamma-glutamyl phosphate reductase (418 aa).

It belongs to the gamma-glutamyl phosphate reductase family.

The protein localises to the cytoplasm. The catalysed reaction is L-glutamate 5-semialdehyde + phosphate + NADP(+) = L-glutamyl 5-phosphate + NADPH + H(+). It participates in amino-acid biosynthesis; L-proline biosynthesis; L-glutamate 5-semialdehyde from L-glutamate: step 2/2. In terms of biological role, catalyzes the NADPH-dependent reduction of L-glutamate 5-phosphate into L-glutamate 5-semialdehyde and phosphate. The product spontaneously undergoes cyclization to form 1-pyrroline-5-carboxylate. This chain is Gamma-glutamyl phosphate reductase, found in Geobacter sulfurreducens (strain ATCC 51573 / DSM 12127 / PCA).